The sequence spans 445 residues: Fatty acid desaturase 3 (445 aa).

A disordered region spans residues 1 to 21 (MGGVGEPGPREGPAQPGAPLP). Topologically, residues 1-133 (MGGVGEPGPR…DMKLFDASPT (133 aa)) are cytoplasmic. The Cytochrome b5 heme-binding domain occupies 20–97 (LPTFCWEQIR…LQPLLIGELA (78 aa)). A helical membrane pass occupies residues 134-154 (FFAFLLGHILAMEVLAWLLIY). At 155 to 159 (LLGPG) the chain is on the lumenal side. A helical transmembrane segment spans residues 160–180 (WVPSALAAFILAISQAQSWCL). The Cytoplasmic segment spans residues 181 to 263 (QHDLGHASIF…KRRYLPYNQQ (83 aa)). The short motif at 182–186 (HDLGH) is the Histidine box-1 element. The short motif at 219–223 (HFQHH) is the Histidine box-2 element. A helical transmembrane segment spans residues 264–284 (HLYFFLIGPPLLTLVNFEVEN). The Lumenal segment spans residues 285 to 306 (LAYMLVCMQWADLLWAASFYAR). Residues 307-327 (FFLSYLPFYGVPGVLLFFVAV) form a helical membrane-spanning segment. Topologically, residues 328–445 (RVLESHWFVW…DIWLDAYLHQ (118 aa)) are cytoplasmic. Positions 383-387 (QIEHH) match the Histidine box-3 motif.

Belongs to the fatty acid desaturase type 1 family. In terms of tissue distribution, highly expressed in various organs and tissues including liver, kidney, brain, lung, pancreas, testis, ovary and skeletal muscle (at protein level).

The protein localises to the endoplasmic reticulum membrane. The enzyme catalyses an N-acylsphing-4-enine + 2 Fe(II)-[cytochrome b5] + O2 + 2 H(+) = an N-acyl-sphinga-4E,14Z-dienine + 2 Fe(III)-[cytochrome b5] + 2 H2O. It carries out the reaction N-(hexanoyl)sphing-4-enine + 2 Fe(II)-[cytochrome b5] + O2 + 2 H(+) = N-hexanoyl-sphinga-4E,14Z-dienine + 2 Fe(III)-[cytochrome b5] + 2 H2O. The catalysed reaction is sphing-4-enine + 2 Fe(II)-[cytochrome b5] + O2 + 2 H(+) = sphinga-4E,14Z-dienine + 2 Fe(III)-[cytochrome b5] + 2 H2O. It catalyses the reaction (11E)-octadecenoyl-CoA + 2 Fe(II)-[cytochrome b5] + O2 + 2 H(+) = (11E,13Z)-octadecadienoyl-CoA + 2 Fe(III)-[cytochrome b5] + 2 H2O. The enzyme catalyses N-acyl-1-deoxysphinganine + 2 Fe(II)-[cytochrome b5] + O2 + 2 H(+) = N-acyl-1-deoxysphing-14Z-enine + 2 Fe(III)-[cytochrome b5] + 2 H2O. It carries out the reaction an N-acylsphinganine + 2 Fe(II)-[cytochrome b5] + O2 + 2 H(+) = an N-acylsphing-14Z-enine + 2 Fe(III)-[cytochrome b5] + 2 H2O. The protein operates within lipid metabolism; sphingolipid metabolism. Its pathway is lipid metabolism; polyunsaturated fatty acid biosynthesis. Functionally, mammals have different sphingoid bases that differ in their length and/or pattern of desaturation and hydroxyl groups. The predominant sphingoid base that comprises mammalian ceramides is sphing-4-enine (sphingosine or SPH) which has a trans (E) desaturation at carbon 4. FADS3 is a desaturase that introduces a cis (Z) double bond between carbon 14 and carbon 15 of the sphingoid base (also known as long chain base, LCB), producing LCBs such as sphinga-4,14-dienine (SPD, d18:2(4E,14Z)) from SPH. Prefers SPH-containing ceramides (N-acylsphing-4-enines) as substrates. Capable of metabolizing also the SPH in its free form. SPD ceramides occur widely in mammalian tissues and cells. Due to their unusual structure containing a cis double bond, SPD ceramides may have an opposite, negative role in lipid microdomain formation relative to conventional ceramides. Could be involved in the detoxification of 1-deoxy sphingolipids, by desaturating the cytotoxic 1-deoxysphinganine (1-deoxySA, m18:0), produced under pathological conditions, to 1-deoxysphingenine (1-deoxysphingosine, 1-deoxySO, m18:1). Although prefers SPH-containing ceramides (N-acylsphing-4-enines) as substrates, it also exhibits activity toward dihydrosphingosine-containing CERs (N-acylsphinganines) and produces 14Z-SPH-containing sphingolipids,which can be found in patients with DEGS1 mutations. Its desaturase mechanism involves an electron transfer facilitated by cytochrome b5. FADS3 also acts as a methyl-end fatty acyl coenzyme A (CoA) desaturase that introduces a cis double bond between the preexisting double bond and the terminal methyl group of the fatty acyl chain. Desaturates (11E)-octadecenoate (trans-vaccenoate, the predominant trans fatty acid in human milk) at carbon 13 to generate (11E,13Z)-octadecadienoate (also known as conjugated linoleic acid 11E,13Z-CLA). This is Fatty acid desaturase 3 from Homo sapiens (Human).